Here is a 111-residue protein sequence, read N- to C-terminus: Beta-microseminoprotein (111 aa).

The N-terminal stretch at 1-20 is a signal peptide; it reads MKFLLGTLVVLATFVTLCNS. Position 21 is a pyrrolidone carboxylic acid (glutamine 21). Cystine bridges form between cysteine 22–cysteine 67, cysteine 35–cysteine 59, cysteine 54–cysteine 90, cysteine 57–cysteine 66, and cysteine 81–cysteine 104.

The protein belongs to the beta-microseminoprotein family. In terms of assembly, homodimer; Interacts with PI16. As to expression, corpora lutea, mostly in the luteal cells surrounding blood vessels.

The protein localises to the secreted. The polypeptide is Beta-microseminoprotein (MSMB) (Sus scrofa (Pig)).